The chain runs to 881 residues: Valine--tRNA ligase (881 aa).

The short motif at 48 to 58 is the 'HIGH' region element; sequence PNITGKLHLGH. Positions 527 to 531 match the 'KMSKS' region motif; it reads KMSKS. Residue Lys-530 coordinates ATP. Coiled coils occupy residues 721-747 and 811-881; these read KNETSENAMNQIIEAIKSIRNVRAEMN and LLDL…AALK.

This sequence belongs to the class-I aminoacyl-tRNA synthetase family. ValS type 1 subfamily. As to quaternary structure, monomer.

It is found in the cytoplasm. The enzyme catalyses tRNA(Val) + L-valine + ATP = L-valyl-tRNA(Val) + AMP + diphosphate. Its function is as follows. Catalyzes the attachment of valine to tRNA(Val). As ValRS can inadvertently accommodate and process structurally similar amino acids such as threonine, to avoid such errors, it has a 'posttransfer' editing activity that hydrolyzes mischarged Thr-tRNA(Val) in a tRNA-dependent manner. The sequence is that of Valine--tRNA ligase from Clostridium acetobutylicum (strain ATCC 824 / DSM 792 / JCM 1419 / IAM 19013 / LMG 5710 / NBRC 13948 / NRRL B-527 / VKM B-1787 / 2291 / W).